A 333-amino-acid polypeptide reads, in one-letter code: 4-hydroxyproline 2-epimerase (333 aa).

Cys90 functions as the Proton acceptor in the catalytic mechanism. Substrate contacts are provided by residues 91–92 (GH), His223, and Asp249. The Proton donor role is filled by Cys253. 254 to 255 (GT) provides a ligand contact to substrate.

This sequence belongs to the proline racemase family.

The enzyme catalyses trans-4-hydroxy-L-proline = cis-4-hydroxy-D-proline. Catalyzes the epimerization of trans-4-hydroxy-L-proline (t4LHyp) to cis-4-hydroxy-D-proline (c4DHyp). May be involved in a degradation pathway of t4LHyp, which would allow S.novella to grow on t4LHyp as a sole carbon source. The sequence is that of 4-hydroxyproline 2-epimerase from Ancylobacter novellus (strain ATCC 8093 / DSM 506 / JCM 20403 / CCM 1077 / IAM 12100 / NBRC 12443 / NCIMB 10456) (Starkeya novella).